A 305-amino-acid chain; its full sequence is MPNASRRVLVLTGPTSSGKTSVACAVSQVSDDLVIINADSKQVYRELPILTSQASCGMLYGYLSVFDEFIPSVASWMRDCADCLESVWAQKGIPLIVGGTPMYLYSLLHGINLLPSLPDCLMRELSEELDNLGPSGFLNRFVCKSGEDLSRFSCDSYKMLRDVAYFLYTGKTIQELYRESSVYKIPYDSIDVVAIIPSDRDSLYSKINERFLEAVNSGAIDEVASVVENKAAFRNRAVTTICGFREIASYLRDEITLERMVAMGQRSIRNYAKRQLTWFRNKFNGIKAFDQPQDAERYILREILL.

13 to 20 (GPTSSGKT) is a binding site for ATP. Residue 15–20 (TSSGKT) coordinates substrate. Residues 39–42 (DSKQ) are interaction with substrate tRNA.

This sequence belongs to the IPP transferase family. As to quaternary structure, monomer. It depends on Mg(2+) as a cofactor.

It catalyses the reaction adenosine(37) in tRNA + dimethylallyl diphosphate = N(6)-dimethylallyladenosine(37) in tRNA + diphosphate. In terms of biological role, catalyzes the transfer of a dimethylallyl group onto the adenine at position 37 in tRNAs that read codons beginning with uridine, leading to the formation of N6-(dimethylallyl)adenosine (i(6)A). In Neorickettsia sennetsu (strain ATCC VR-367 / Miyayama) (Ehrlichia sennetsu), this protein is tRNA dimethylallyltransferase.